A 371-amino-acid polypeptide reads, in one-letter code: Pyruvate dehydrogenase E1 component subunit alpha (371 aa).

In terms of assembly, heterodimer of an alpha and a beta chain. It depends on thiamine diphosphate as a cofactor.

It catalyses the reaction N(6)-[(R)-lipoyl]-L-lysyl-[protein] + pyruvate + H(+) = N(6)-[(R)-S(8)-acetyldihydrolipoyl]-L-lysyl-[protein] + CO2. Its function is as follows. The pyruvate dehydrogenase complex catalyzes the overall conversion of pyruvate to acetyl-CoA and CO(2). It contains multiple copies of three enzymatic components: pyruvate dehydrogenase (E1), dihydrolipoamide acetyltransferase (E2) and lipoamide dehydrogenase (E3). In Bacillus cereus, this protein is Pyruvate dehydrogenase E1 component subunit alpha.